The chain runs to 449 residues: N-succinylarginine dihydrolase (449 aa).

Residues 19 to 28 (GGLSYGNVAS), Asn110, and 137 to 138 (HR) contribute to the substrate site. Positions 23 to 43 (YGNVASQSNSQQGSNPREAAR) are disordered. Residues 25 to 37 (NVASQSNSQQGSN) show a composition bias toward polar residues. Residue Glu174 is part of the active site. Residue Arg214 coordinates substrate. His250 is a catalytic residue. 2 residues coordinate substrate: Asp252 and Asn365. Residue Cys371 is the Nucleophile of the active site.

This sequence belongs to the succinylarginine dihydrolase family. In terms of assembly, homodimer.

The catalysed reaction is N(2)-succinyl-L-arginine + 2 H2O + 2 H(+) = N(2)-succinyl-L-ornithine + 2 NH4(+) + CO2. The protein operates within amino-acid degradation; L-arginine degradation via AST pathway; L-glutamate and succinate from L-arginine: step 2/5. Catalyzes the hydrolysis of N(2)-succinylarginine into N(2)-succinylornithine, ammonia and CO(2). The protein is N-succinylarginine dihydrolase of Pseudomonas putida (strain GB-1).